We begin with the raw amino-acid sequence, 361 residues long: Glyceraldehyde-3-phosphate dehydrogenase, glycosomal (361 aa).

NAD(+)-binding positions include 13-14, Asp-39, Gln-92, and Ser-135; that span reads RI. D-glyceraldehyde 3-phosphate contacts are provided by residues 166–168, Thr-198, 227–228, and Arg-250; these read SCT and TG. The active-site Nucleophile is the Cys-167. Asn-336 serves as a coordination point for NAD(+). Positions 359–361 match the Microbody targeting signal motif; the sequence is SKM.

It belongs to the glyceraldehyde-3-phosphate dehydrogenase family. In terms of assembly, homotetramer.

It localises to the glycosome. It catalyses the reaction D-glyceraldehyde 3-phosphate + phosphate + NAD(+) = (2R)-3-phospho-glyceroyl phosphate + NADH + H(+). Its pathway is carbohydrate degradation; glycolysis; pyruvate from D-glyceraldehyde 3-phosphate: step 1/5. In Leishmania mexicana, this protein is Glyceraldehyde-3-phosphate dehydrogenase, glycosomal (GAPG).